Here is a 639-residue protein sequence, read N- to C-terminus: Protein phosphatase EYA4 (639 aa).

N-acetylmethionine is present on Met1. 3 disordered regions span residues 1-72 (MEDS…GGEN), 210-232 (QTQS…PQPG), and 300-368 (ADGT…DSDL). Lys14 is covalently cross-linked (Glycyl lysine isopeptide (Lys-Gly) (interchain with G-Cter in SUMO2)). A compositionally biased stretch (polar residues) spans 18–30 (ESDVSQSQNSRSM). Lys52 participates in a covalent cross-link: Glycyl lysine isopeptide (Lys-Gly) (interchain with G-Cter in SUMO2). Residues 56-66 (SNLSSTSVTTN) show a composition bias toward low complexity. Residues 300 to 334 (ADGTPSSTSTYQLQESLPGLTNQPGEFDTMQSPST) are compositionally biased toward polar residues. Position 361 is a phosphoserine (Ser361). Asp375 (nucleophile) is an active-site residue. Mg(2+) is bound by residues Asp375, Asp377, and Asp603. Asp377 acts as the Proton donor in catalysis.

This sequence belongs to the HAD-like hydrolase superfamily. EYA family. In terms of assembly, interacts with SIX3; translocates EYA4 from the cytoplasm to the nucleus and promotes activation of their target genes. Mg(2+) is required as a cofactor. In terms of tissue distribution, highly expressed in heart and skeletal muscle.

It localises to the cytoplasm. Its subcellular location is the nucleus. It carries out the reaction O-phospho-L-tyrosyl-[protein] + H2O = L-tyrosyl-[protein] + phosphate. Its function is as follows. Tyrosine phosphatase that specifically dephosphorylates 'Tyr-142' of histone H2AX (H2AXY142ph). 'Tyr-142' phosphorylation of histone H2AX plays a central role in DNA repair and acts as a mark that distinguishes between apoptotic and repair responses to genotoxic stress. Promotes efficient DNA repair by dephosphorylating H2AX, promoting the recruitment of DNA repair complexes containing MDC1. Its function as histone phosphatase probably explains its role in transcription regulation during organogenesis. May be involved in development of the eye. This is Protein phosphatase EYA4 (EYA4) from Homo sapiens (Human).